Consider the following 77-residue polypeptide: Neurotoxin LmNaTx21.1 (77 aa).

The first 7 residues, 1–7 (LILVACL), serve as a signal peptide directing secretion. An LCN-type CS-alpha/beta domain is found at 16 to 76 (KDGYPVDWNN…VEIKGYGRCR (61 aa)). Cystine bridges form between C26-C75, C30-C51, C37-C58, and C41-C60.

Belongs to the long (4 C-C) scorpion toxin superfamily. Sodium channel inhibitor family. Alpha subfamily. Expressed by the venom gland.

Its subcellular location is the secreted. Functionally, binds voltage-independently at site-3 of voltage-gated sodium channels (Nav) and inhibits the inactivation of the activated channels, thereby blocking neuronal transmission. The polypeptide is Neurotoxin LmNaTx21.1 (Lychas mucronatus (Chinese swimming scorpion)).